A 188-amino-acid chain; its full sequence is Phospholipase A2 inhibitor 31 kDa subunit (188 aa).

Disulfide bonds link C3/C27, C6/C13, C20/C48, C54/C75, C76/C81, C99/C124, C117/C146, and C150/C172. The N-linked (GlcNAc...) asparagine glycan is linked to N157.

It belongs to the CNF-like-inhibitor family. In terms of assembly, heterodimer with phospholipase A2 inhibitor 25 kDa. Post-translationally, N-glycosylated. Expressed by the liver.

The protein resides in the secreted. Functionally, inhibits the enzymatic activity of phospholipase A2. The polypeptide is Phospholipase A2 inhibitor 31 kDa subunit (Naja kaouthia (Monocled cobra)).